A 272-amino-acid chain; its full sequence is Insulin-like growth factor-binding protein 1 (272 aa).

Residues Met1 to Gly25 form the signal peptide. In terms of domain architecture, IGFBP N-terminal spans Gln28–Glu109. Cystine bridges form between Cys32-Cys59, Cys35-Cys61, Cys43-Cys62, Cys50-Cys65, Cys73-Cys86, and Cys80-Cys106. Phosphoserine is present on residues Ser139, Ser157, and Ser169. Position 170 is a phosphothreonine (Thr170). Residue Tyr171 is modified to Phosphotyrosine. Residues Lys186–Cys264 form the Thyroglobulin type-1 domain. 3 disulfides stabilise this stretch: Cys189/Cys219, Cys230/Cys241, and Cys243/Cys264. At Ser255 the chain carries Phosphoserine. A Cell attachment site motif is present at residues Arg259–Asp261.

In terms of assembly, binds equally well IGF1 and IGF2. Interacts with integrin ITGA5:ITGB1. Interacts with VHL; this interaction inhibits HIF1A degradation.

Its subcellular location is the secreted. Multifunctional protein that plays a critical role in regulating the availability of IGFs such as IGF1 and IGF2 to their receptors and thereby regulates IGF-mediated cellular processes including cell migration, proliferation, differentiation or apoptosis in a cell-type specific manner. Also plays a positive role in cell migration by interacting with integrin ITGA5:ITGB1 through its RGD motif. Mechanistically, binding to integrins leads to activation of focal adhesion kinase/PTK2 and stimulation of the mitogen-activated protein kinase (MAPK) pathway. Regulates cardiomyocyte apoptosis by suppressing HIF-1alpha/HIF1A ubiquitination and subsequent degradation. This Mus musculus (Mouse) protein is Insulin-like growth factor-binding protein 1 (Igfbp1).